Reading from the N-terminus, the 156-residue chain is Small ribosomal subunit protein uS7 (156 aa).

This sequence belongs to the universal ribosomal protein uS7 family. As to quaternary structure, part of the 30S ribosomal subunit. Contacts proteins S9 and S11.

One of the primary rRNA binding proteins, it binds directly to 16S rRNA where it nucleates assembly of the head domain of the 30S subunit. Is located at the subunit interface close to the decoding center, probably blocks exit of the E-site tRNA. This chain is Small ribosomal subunit protein uS7, found in Synechococcus sp. (strain CC9605).